A 481-amino-acid chain; its full sequence is MRRSDRLRCAGASLLVVLCGVFRSSFGGRTLPALSDDIPFRLKWPGPDFTLPTAGIPYKEDNYIIMTTADKEKYKCLLPLMANGNEEQDGEYKGPSPGALLEPLFKLSSCSYRIESYWTYEVCHGKYIRQYHEEKETGQKLSIQEYYLGKMMKKSTTEAGENQEEKESAESPKEIYTKNIEGQMTPYYPVEMINGTPCSLKQNQPRSSTVMYICHPESKHEILSVAEVTTCEYEVVILTPLLCNHPKYRFRTSPINDIFCQSMPGSPLRPQSLVKLEHQKEEIKSPLKPNKEEEQQLLREKFSTIHKPVTVGSQQQVTVGTTHISRLTDEQLIKEFLSGSYCFHGGVGWWKYEFCYGKYVHQYHEDKDTGKTTVVVGTWKADEHQEWAKKNLARAYMTTPDGVQTVKTVSHFYGGGDVCEVSEQPRQVIVKLKCKESESPHAVTVYMLEPQTCQYILGVESPVICKILDTADENGLLSIPN.

The first 27 residues, methionine 1–glycine 27, serve as a signal peptide directing secretion. MRH domains follow at residues serine 108–histidine 245 and serine 340–isoleucine 467. 6 cysteine pairs are disulfide-bonded: cysteine 110-cysteine 123, cysteine 198-cysteine 231, cysteine 214-cysteine 243, cysteine 342-cysteine 355, cysteine 419-cysteine 453, and cysteine 434-cysteine 465.

The protein localises to the endoplasmic reticulum lumen. In terms of biological role, probable lectin that binds selectively to improperly folded lumenal proteins. May function in endoplasmic reticulum quality control and endoplasmic reticulum-associated degradation (ERAD) of both non-glycosylated proteins and glycoproteins. The protein is Endoplasmic reticulum lectin 1 (erlec1) of Xenopus tropicalis (Western clawed frog).